Reading from the N-terminus, the 184-residue chain is Histone H3-like centromeric protein CSE4 (184 aa).

A disordered region spans residues 54-81 (YIQPERSASSQQIHPPEHHISAHERITK). The segment covering 68 to 80 (PPEHHISAHERIT) has biased composition (basic and acidic residues). The interval 82 to 182 (ARGTRYKPTD…MQLARRIRGQ (101 aa)) is H3-like.

It belongs to the histone H3 family. Component of centromeric nucleosomes, where DNA is wrapped around a histone octamer core. The octamer contains two molecules each of H2A, H2B, CSE4/CENPA and H4 assembled in one CSE4-H4 heterotetramer and two H2A-H2B heterodimers. Interacts with the inner kinetochore. Post-translationally, ubiquitinated. Is degraded through ubiquitin-mediated proteolysis when not protected by its association to the kinetochore.

The protein localises to the nucleus. It is found in the chromosome. The protein resides in the centromere. In terms of biological role, histone H3-like nucleosomal protein that is specifically found in centromeric nucleosomes. Replaces conventional H3 in the nucleosome core of centromeric chromatin that serves as an assembly site for the inner kinetochore. Required for recruitment and assembly of kinetochore proteins, mitotic progression and chromosome segregation. May serve as an epigenetic mark that propagates centromere identity through replication and cell division. The protein is Histone H3-like centromeric protein CSE4 (CSE4) of Kluyveromyces lactis (strain ATCC 8585 / CBS 2359 / DSM 70799 / NBRC 1267 / NRRL Y-1140 / WM37) (Yeast).